Here is a 371-residue protein sequence, read N- to C-terminus: 4-hydroxyprotoasukamycin monooxygenase (371 aa).

Belongs to the bacterial luciferase oxidoreductase family. FMN is required as a cofactor.

The enzyme catalyses 4-hydroxyprotoasukamycin + NADH + O2 + H(+) = asukamycin + NAD(+) + H2O. It functions in the pathway antibiotic biosynthesis. Involved in the biosynthesis of the antibiotic asukamycin. Catalyzes the epoxidation of 4-hydroxyprotoasukamycin to the final product, asukamycin. Can also convert some 4-hydroxyprotoasukamycin derivatives to their asukamycin derivatives, but cannot use protoasukamycin as substrate. Can also use NADPH, but catalytic efficiency is 20-fold higher with NADH. This is 4-hydroxyprotoasukamycin monooxygenase from Streptomyces nodosus subsp. asukaensis.